A 273-amino-acid polypeptide reads, in one-letter code: Large ribosomal subunit protein uL2 (273 aa).

The segment at 222 to 273 is disordered; it reads GMAMNPVDHPHGGGEGRNKGIQPVSPWGTPAKGYRTRSNKRTDKYIVRRRNK. Over residues 229–239 the composition is skewed to basic and acidic residues; the sequence is DHPHGGGEGRN.

This sequence belongs to the universal ribosomal protein uL2 family. In terms of assembly, part of the 50S ribosomal subunit. Forms a bridge to the 30S subunit in the 70S ribosome.

Functionally, one of the primary rRNA binding proteins. Required for association of the 30S and 50S subunits to form the 70S ribosome, for tRNA binding and peptide bond formation. It has been suggested to have peptidyltransferase activity; this is somewhat controversial. Makes several contacts with the 16S rRNA in the 70S ribosome. This Tolumonas auensis (strain DSM 9187 / NBRC 110442 / TA 4) protein is Large ribosomal subunit protein uL2.